Consider the following 560-residue polypeptide: Endogenous retrovirus group K member 18 Env polyprotein (560 aa).

Positions 355 to 375 are fusion peptide; it reads FIFTLIAVIMGLIAVTATAAV. The chain crosses the membrane as a helical span at residues 522-542; it reads IRSTMIINLILIVVCLFCLLL.

Belongs to the beta type-B retroviral envelope protein family. HERV class-II K(HML-2) env subfamily. The surface (SU) and transmembrane (TM) proteins form a heterodimer. SU and TM are attached by noncovalent interactions or by a labile interchain disulfide bond. In terms of processing, specific enzymatic cleavages in vivo yield the mature SU and TM proteins. Expressed at higher level in the thymus. Expressed at lower level in peripheral blood lymphocytes.

It localises to the cell membrane. It is found in the virion. Retroviral envelope proteins mediate receptor recognition and membrane fusion during early infection. Endogenous envelope proteins may have kept, lost or modified their original function during evolution. This envelope protein has superantigenic properties. Functionally, SU mediates receptor recognition. In terms of biological role, TM anchors the envelope heterodimer to the viral membrane through one transmembrane domain. The other hydrophobic domain, called fusion peptide, mediates fusion of the viral membrane with the target cell membrane. The protein is Endogenous retrovirus group K member 18 Env polyprotein (ERVK-18) of Homo sapiens (Human).